A 201-amino-acid chain; its full sequence is Small ribosomal subunit protein uS4c (201 aa).

The tract at residues 15-43 is disordered; sequence LGALPGLTNKRPRAGSDLRNQSRSGKRSQ. Positions 89 to 149 constitute an S4 RNA-binding domain; it reads MRLDNILFRL…DEQKSIALIQ (61 aa).

In terms of assembly, component of the chloroplast small ribosomal subunit (SSU). Mature 70S chloroplast ribosomes of higher plants consist of a small (30S) and a large (50S) subunit. The 30S small subunit contains 1 molecule of ribosomal RNA (16S rRNA) and 24 different proteins. The 50S large subunit contains 3 rRNA molecules (23S, 5S and 4.5S rRNA) and 33 different proteins.

The protein resides in the plastid. It is found in the chloroplast. Functionally, component of the chloroplast ribosome (chloro-ribosome), a dedicated translation machinery responsible for the synthesis of chloroplast genome-encoded proteins, including proteins of the transcription and translation machinery and components of the photosynthetic apparatus. The polypeptide is Small ribosomal subunit protein uS4c (rps4) (Spinacia oleracea (Spinach)).